We begin with the raw amino-acid sequence, 101 residues long: Urease subunit beta (101 aa).

Belongs to the urease beta subunit family. As to quaternary structure, heterotrimer of UreA (gamma), UreB (beta) and UreC (alpha) subunits. Three heterotrimers associate to form the active enzyme.

The protein localises to the cytoplasm. The enzyme catalyses urea + 2 H2O + H(+) = hydrogencarbonate + 2 NH4(+). It functions in the pathway nitrogen metabolism; urea degradation; CO(2) and NH(3) from urea (urease route): step 1/1. The sequence is that of Urease subunit beta from Agrobacterium fabrum (strain C58 / ATCC 33970) (Agrobacterium tumefaciens (strain C58)).